We begin with the raw amino-acid sequence, 144 residues long: Large ribosomal subunit protein uL13 (144 aa).

Belongs to the universal ribosomal protein uL13 family. In terms of assembly, part of the 50S ribosomal subunit.

This protein is one of the early assembly proteins of the 50S ribosomal subunit, although it is not seen to bind rRNA by itself. It is important during the early stages of 50S assembly. In Clostridium botulinum (strain ATCC 19397 / Type A), this protein is Large ribosomal subunit protein uL13.